Reading from the N-terminus, the 141-residue chain is MAKKVVGFIKLQIPAGGANPAPPVGPALGQKGVNIMEFCKQFNAKTQSQAGTIIPVVITVFSDKSFTFITKTPPAAVLLIKEAGLQKGSGEPNKNKVGTVSKEQVRKIAELKMPDLNAVDVEGAMQMVMGTARSMGIVVED.

Belongs to the universal ribosomal protein uL11 family. Part of the ribosomal stalk of the 50S ribosomal subunit. Interacts with L10 and the large rRNA to form the base of the stalk. L10 forms an elongated spine to which L12 dimers bind in a sequential fashion forming a multimeric L10(L12)X complex. One or more lysine residues are methylated.

Its function is as follows. Forms part of the ribosomal stalk which helps the ribosome interact with GTP-bound translation factors. In Prosthecochloris aestuarii (strain DSM 271 / SK 413), this protein is Large ribosomal subunit protein uL11.